We begin with the raw amino-acid sequence, 1118 residues long: Ubiquitin carboxyl-terminal hydrolase 8 (1118 aa).

Residues 33–116 enclose the MIT domain; the sequence is TKSYVHSALK…ESLKLRYEEA (84 aa). Basic and acidic residues-rich tracts occupy residues 120–146 and 158–177; these read KKLE…REDG and LDSK…KCET. A disordered region spans residues 120–177; it reads KKLEEKDRQEEAQRLQQKRQETGREDGGTLAKGSLENVLDSKDKTQKSNGEKNEKCET. Ser-160 is modified (phosphoserine). In terms of domain architecture, Rhodanese spans 195-313; the sequence is KNISLIIMDA…WLLCYPQYTT (119 aa). Ser-392 and Ser-400 each carry phosphoserine. The interval 402 to 447 is disordered; that stretch reads KNVPQIDRTKKPAVKLPEEHRIKSESTNHEQQSPQSGKVIPDRSTK. Positions 405-413 match the SH3-binding motif; it reads PQIDRTKKP. Positions 417 to 429 are enriched in basic and acidic residues; it reads LPEEHRIKSESTN. Position 452 is a phosphoserine (Ser-452). Basic and acidic residues predominate over residues 475 to 573; it reads KNKQEKELRE…AKKSVEDRGK (99 aa). Disordered stretches follow at residues 475-648 and 679-746; these read KNKQ…GRIV and YPPE…ENKP. Residue Thr-577 is modified to Phosphothreonine. Residues 618 to 645 are compositionally biased toward basic and acidic residues; the sequence is TFREDTDDTERNKAQREPLTRARSEEMG. Residues 716–726 show a composition bias toward polar residues; that stretch reads SYSSPDITQAI. 2 positions are modified to phosphoserine: Ser-718 and Ser-719. Residues 777-1109 form the USP domain; the sequence is TGLRNLGNTC…AAYILFYTSL (333 aa). Catalysis depends on Cys-786, which acts as the Nucleophile. At Thr-945 the chain carries Phosphothreonine. His-1067 (proton acceptor) is an active-site residue.

Belongs to the peptidase C19 family. In terms of assembly, forms a ternary complex with RNF128 and OTUB1. Interacts (via C-terminal UCH catalytic domain) with OTUB1 isoform 1. Interacts with STAM2 (via SH3 domain). Interacts with DNAJB3, EGFR, EPS15, RASGRF1, RNF41, YWHAE, YWHAG and YWHAZ. Interacts with NBR1, RASGRF1, RNF41 and IST1. Associates with the ESCRT-0 complex and with microtubules. Interacts with BIRC6/bruce and KIF23/MKLP1. (Microbial infection) Interacts with Zika virus non-structural protein 1. Post-translationally, phosphorylation of Ser-718 is essential for interaction with YWHAE and for cytosol localization. Undergoes dephosphorylation at Ser-718 in the M phase. Tyrosine-phosphorylated in its N-terminal half in an EGFR-dependent manner. In terms of processing, ubiquitinated. Inactive form is mostly monoubiquitinated, but polyubiquitination happens too. Ubiquitination is increased in EGF-stimulated cells. Ubiquitination of active form is undetectable, suggesting a possibility that USP8 deubiquitinates itself, thereby regulating its own function.

Its subcellular location is the cytoplasm. The protein localises to the nucleus. It is found in the endosome membrane. It localises to the cell membrane. The catalysed reaction is Thiol-dependent hydrolysis of ester, thioester, amide, peptide and isopeptide bonds formed by the C-terminal Gly of ubiquitin (a 76-residue protein attached to proteins as an intracellular targeting signal).. In terms of biological role, hydrolase that can remove conjugated ubiquitin from proteins and therefore plays an important regulatory role at the level of protein turnover by preventing degradation. Converts both 'Lys-48' an 'Lys-63'-linked ubiquitin chains. Catalytic activity is enhanced in the M phase. Involved in cell proliferation. Required to enter into S phase in response to serum stimulation. May regulate T-cell anergy mediated by RNF128 via the formation of a complex containing RNF128 and OTUB1. Probably regulates the stability of STAM2 and RASGRF1. Regulates endosomal ubiquitin dynamics, cargo sorting, membrane traffic at early endosomes, and maintenance of ESCRT-0 stability. The level of protein ubiquitination on endosomes is essential for maintaining the morphology of the organelle. Deubiquitinates EPS15 and controls tyrosine kinase stability. Removes conjugated ubiquitin from EGFR thus regulating EGFR degradation and downstream MAPK signaling. Involved in acrosome biogenesis through interaction with the spermatid ESCRT-0 complex and microtubules. Deubiquitinates BIRC6/bruce and KIF23/MKLP1. Deubiquitinates BACE1 which inhibits BACE1 lysosomal degradation and modulates BACE-mediated APP cleavage and amyloid-beta formation. This is Ubiquitin carboxyl-terminal hydrolase 8 from Homo sapiens (Human).